Here is a 204-residue protein sequence, read N- to C-terminus: Tumor necrosis factor receptor superfamily member 26 (204 aa).

An N-terminal signal peptide occupies residues 1–19 (MTRLRLLLLLGLLLRVAVC). Residues 20–164 (SVNTITLCKI…SQCFCFSKPL (145 aa)) are Extracellular-facing. 9 disulfide bridges follow: Cys27/Cys38, Cys39/Cys52, Cys42/Cys61, Cys64/Cys79, Cys82/Cys95, Cys85/Cys103, Cys105/Cys120, Cys123/Cys135, and Cys126/Cys143. TNFR-Cys repeat units lie at residues 27–61 (CKIG…KSEC), 63–103 (PCDS…DRVC), and 104–143 (QCKQ…DTVC). A glycan (N-linked (GlcNAc...) asparagine) is linked at Asn57. Asn136 carries N-linked (GlcNAc...) asparagine glycosylation. The helical transmembrane segment at 165 to 185 (GIVVIIAAFIIIIGAVIILIL) threads the bilayer. Over 186-204 (KIICYCKRGENIQLSSTML) the chain is Cytoplasmic.

As to expression, expressed in thymus and spleen. Detectable levels in lung.

Its subcellular location is the membrane. This Mus musculus (Mouse) protein is Tumor necrosis factor receptor superfamily member 26 (Tnfrsf26).